Reading from the N-terminus, the 329-residue chain is HTH-type transcriptional regulator ArgR (329 aa).

The region spanning 214–312 (TQAVLLMEAN…GVTPREDRNQ (99 aa)) is the HTH araC/xylS-type domain. 2 DNA-binding regions (H-T-H motif) span residues 231-252 (DEIA…KQYL) and 279-302 (IIQI…RNFF). Positions 307–329 (REDRNQRRGGSAFETTFTPVERG) are disordered. The segment covering 319-329 (FETTFTPVERG) has biased composition (polar residues).

Functionally, argR could be a transcriptional activator of the dauBAR operon in response to the presence of L-Arg. The protein is HTH-type transcriptional regulator ArgR (argR) of Pseudomonas aeruginosa (strain ATCC 15692 / DSM 22644 / CIP 104116 / JCM 14847 / LMG 12228 / 1C / PRS 101 / PAO1).